A 40-amino-acid polypeptide reads, in one-letter code: MLIFALGSVVVGIYLMAVVGMDIHQNGLKSVVETIWNGVK.

This is an uncharacterized protein from Escherichia coli (Bacteriophage T4).